The following is a 305-amino-acid chain: Undecaprenyl-diphosphatase (305 aa).

Helical transmembrane passes span 18 to 38 (GVTE…PALV), 55 to 75 (YLAF…VFFW), 103 to 123 (WLIV…EQLF), 130 to 150 (PVPA…GEVL), 187 to 207 (GVLI…RSGI), 225 to 245 (FSFL…IPEL), 246 to 266 (FGPL…ASFV), and 284 to 304 (LTPF…WLAL).

This sequence belongs to the UppP family.

It localises to the cell membrane. The enzyme catalyses di-trans,octa-cis-undecaprenyl diphosphate + H2O = di-trans,octa-cis-undecaprenyl phosphate + phosphate + H(+). Catalyzes the dephosphorylation of undecaprenyl diphosphate (UPP). Confers resistance to bacitracin. In Mycolicibacterium paratuberculosis (strain ATCC BAA-968 / K-10) (Mycobacterium paratuberculosis), this protein is Undecaprenyl-diphosphatase.